We begin with the raw amino-acid sequence, 228 residues long: 7-cyano-7-deazaguanine synthase (228 aa).

Residue 11 to 21 (LSGGLDSATCL) coordinates ATP. Positions 191, 201, 204, and 207 each coordinate Zn(2+).

The protein belongs to the QueC family. It depends on Zn(2+) as a cofactor.

The catalysed reaction is 7-carboxy-7-deazaguanine + NH4(+) + ATP = 7-cyano-7-deazaguanine + ADP + phosphate + H2O + H(+). The protein operates within purine metabolism; 7-cyano-7-deazaguanine biosynthesis. Its function is as follows. Catalyzes the ATP-dependent conversion of 7-carboxy-7-deazaguanine (CDG) to 7-cyano-7-deazaguanine (preQ(0)). This Azoarcus sp. (strain BH72) protein is 7-cyano-7-deazaguanine synthase.